The primary structure comprises 1488 residues: Chromosome partition protein MukB (1488 aa).

34-41 (GGNGAGKS) contributes to the ATP binding site. Coiled coils occupy residues 326-418 (LEAD…QYNQ), 444-472 (LDTFQAKEQEATEKLLSLEQKMSVAQTAH), and 509-602 (RHLA…QRAP). Residues 666–783 (PGGAEDQRLN…SLPIFGRAAR (118 aa)) are flexible hinge. Coiled-coil stretches lie at residues 835-923 (EAEI…AKLE), 977-1116 (EMLS…AKAG), and 1209-1265 (VEAI…LQSV). A disordered region spans residues 1049–1074 (ADSGAEERARQRRDELHAQLSNNRSR). Basic and acidic residues predominate over residues 1051–1065 (SGAEERARQRRDELH).

This sequence belongs to the SMC family. MukB subfamily. Homodimerization via its hinge domain. Binds to DNA via its C-terminal region. Interacts, and probably forms a ternary complex, with MukE and MukF via its C-terminal region. The complex formation is stimulated by calcium or magnesium. Interacts with tubulin-related protein FtsZ.

Its subcellular location is the cytoplasm. The protein resides in the nucleoid. Functionally, plays a central role in chromosome condensation, segregation and cell cycle progression. Functions as a homodimer, which is essential for chromosome partition. Involved in negative DNA supercoiling in vivo, and by this means organize and compact chromosomes. May achieve or facilitate chromosome segregation by condensation DNA from both sides of a centrally located replisome during cell division. The sequence is that of Chromosome partition protein MukB from Salmonella enteritidis PT4 (strain P125109).